The primary structure comprises 463 residues: Glycine--tRNA ligase (463 aa).

Residues R100 and E175 each contribute to the substrate site. ATP-binding positions include 207–209 (RNE), 217–222 (FRTREF), 291–292 (EL), and 335–338 (GADR). Substrate is bound at residue 222 to 226 (FEQME). 331–335 (EPSVG) contributes to the substrate binding site.

Belongs to the class-II aminoacyl-tRNA synthetase family. Homodimer.

Its subcellular location is the cytoplasm. The enzyme catalyses tRNA(Gly) + glycine + ATP = glycyl-tRNA(Gly) + AMP + diphosphate. Its function is as follows. Catalyzes the attachment of glycine to tRNA(Gly). The sequence is that of Glycine--tRNA ligase from Clostridium kluyveri (strain NBRC 12016).